The sequence spans 194 residues: Peptidyl-tRNA hydrolase (194 aa).

TRNA is bound at residue Tyr16. The active-site Proton acceptor is the His21. 3 residues coordinate tRNA: Phe67, Asn69, and Asn115.

This sequence belongs to the PTH family. As to quaternary structure, monomer.

The protein resides in the cytoplasm. The enzyme catalyses an N-acyl-L-alpha-aminoacyl-tRNA + H2O = an N-acyl-L-amino acid + a tRNA + H(+). In terms of biological role, hydrolyzes ribosome-free peptidyl-tRNAs (with 1 or more amino acids incorporated), which drop off the ribosome during protein synthesis, or as a result of ribosome stalling. Its function is as follows. Catalyzes the release of premature peptidyl moieties from peptidyl-tRNA molecules trapped in stalled 50S ribosomal subunits, and thus maintains levels of free tRNAs and 50S ribosomes. The protein is Peptidyl-tRNA hydrolase of Shigella flexneri.